The chain runs to 342 residues: Platelet-activating factor receptor (342 aa).

At 1–16 (MEPNNSFRVDSEFRYT) the chain is on the extracellular side. Asn4 carries an N-linked (GlcNAc...) asparagine glycan. Residues 17–38 (LFPIFYSIVFVLGVIANSYVLW) traverse the membrane as a helical segment. Over 39–54 (VFARLYPSKKFNEIKI) the chain is Cytoplasmic. A helical membrane pass occupies residues 55-74 (FMVNLTMADLLFLVTLPLWI). Residues 75–91 (VYYYNQGDWILPKFLCN) lie on the Extracellular side of the membrane. Cysteines 90 and 173 form a disulfide. A helical membrane pass occupies residues 92–113 (LAGCFFFINTYCSVAFLAVITY). At 114–133 (NRFQAVTRPIKTAQATTRKR) the chain is on the cytoplasmic side. A helical membrane pass occupies residues 134 to 155 (GFLLSLIIWVSIVGAASYFFVL). Topologically, residues 156 to 184 (DSTNSEPKKTGSGNITRCFEHYEKGSIPV) are extracellular. A glycan (N-linked (GlcNAc...) asparagine) is linked at Asn169. Residues 185–205 (LIIHIFLVFSFFLVFLIILFC) form a helical membrane-spanning segment. The Cytoplasmic segment spans residues 206-233 (NLVIIRTLLTQQVQMQRNAEVKRRALWM). The chain crosses the membrane as a helical span at residues 234–254 (VCTVLAVFVICFVPHHLVQLP). Over 255–276 (WTLAELGFQDTDFHQGINDAHQ) the chain is Extracellular. The helical transmembrane segment at 277–296 (VTLCLLSTNCVLDPIIYCFL) threads the bilayer. Topologically, residues 297–342 (TKKFRKHLTEKLYSMRESRKCSRATSETGTEVVVQLKDAPIKSLKY) are cytoplasmic.

Belongs to the G-protein coupled receptor 1 family. In terms of assembly, interacts with ARRB1.

The protein resides in the cell membrane. Its function is as follows. Receptor for platelet activating factor, a chemotactic phospholipid mediator that possesses potent inflammatory, smooth-muscle contractile and hypotensive activity. Seems to mediate its action via a G protein that activates a phosphatidylinositol-calcium second messenger system. The polypeptide is Platelet-activating factor receptor (Capra hircus (Goat)).